A 140-amino-acid polypeptide reads, in one-letter code: uncharacterized protein (140 aa).

The C2H2-type zinc-finger motif lies at 21-42; sequence CPYCNYTNADVKAIKKHIKSKH.

This sequence to M.jannaschii MJECL27.

This is an uncharacterized protein from Methanocaldococcus jannaschii (strain ATCC 43067 / DSM 2661 / JAL-1 / JCM 10045 / NBRC 100440) (Methanococcus jannaschii).